The sequence spans 526 residues: Sugar transport protein 13 (526 aa).

Topologically, residues 1-18 (MTGGGFATSANGVEFEAK) are cytoplasmic. The helical transmembrane segment at 19–39 (ITPIVIISCIMAATGGLMFGY) threads the bilayer. Residues 40–81 (DVGVSGGVTSMPDFLEKFFPVVYRKVVAGADKDSNYCKYDNQ) are Extracellular-facing. A helical membrane pass occupies residues 82 to 102 (GLQLFTSSLYLAGLTATFFAS). Residues 103-111 (YTTRTLGRR) lie on the Cytoplasmic side of the membrane. Residues 112–132 (LTMLIAGVFFIIGVALNAGAQ) form a helical membrane-spanning segment. The Extracellular portion of the chain corresponds to 133 to 141 (DLAMLIAGR). The chain crosses the membrane as a helical span at residues 142-162 (ILLGCGVGFANQAVPLFLSEI). Residues 163–168 (APTRIR) are Cytoplasmic-facing. Residues 169-189 (GGLNILFQLNVTIGILFANLV) traverse the membrane as a helical segment. At 190 to 203 (NYGTAKIKGGWGWR) the chain is on the extracellular side. The helical transmembrane segment at 204–224 (LSLGLAGIPALLLTVGALLVT) threads the bilayer. Residues 225-296 (ETPNSLVERG…IAVALQIFQQ (72 aa)) lie on the Cytoplasmic side of the membrane. Residues 297 to 317 (CTGINAIMFYAPVLFSTLGFG) traverse the membrane as a helical segment. The Extracellular segment spans residues 318-319 (SD). A helical membrane pass occupies residues 320–340 (ASLYSAVVTGAVNVLSTLVSI). The Cytoplasmic portion of the chain corresponds to 341–349 (YSVDKVGRR). A helical membrane pass occupies residues 350-370 (VLLLEAGVQMFFSQVVIAIIL). The Extracellular portion of the chain corresponds to 371 to 383 (GVKVTDTSTNLSK). The chain crosses the membrane as a helical span at residues 384 to 404 (GFAILVVVMICTYVAAFAWSW). Over 405 to 426 (GPLGWLIPSETFPLETRSAGQS) the chain is Cytoplasmic. A helical transmembrane segment spans residues 427-447 (VTVCVNLLFTFIIAQAFLSML). At 448-451 (CHFK) the chain is on the extracellular side. Residues 452-472 (FGIFIFFSAWVLIMSVFVMFL) form a helical membrane-spanning segment. Residues 473-526 (LPETKNIPIEEMTERVWKKHWFWARFMDDHNDHEFVNGEKSNGKSNGFDPSTRL) are Cytoplasmic-facing.

It belongs to the major facilitator superfamily. Sugar transporter (TC 2.A.1.1) family.

The protein resides in the cell membrane. Functionally, mediates an active uptake of hexoses, probably by sugar/hydrogen symport. The protein is Sugar transport protein 13 (STP13) of Arabidopsis thaliana (Mouse-ear cress).